The chain runs to 262 residues: Zinc-finger homeodomain protein 6 (262 aa).

Basic and acidic residues-rich tracts occupy residues 1 to 25 and 36 to 47; these read MEVR…DHHR and NKEKPTTKRNGS. The segment at 1–93 is disordered; that stretch reads MEVREKKDEK…ECQKNHAASS (93 aa). Residues 82-131 form a ZF-HD dimerization-type; degenerate zinc finger; it reads YRECQKNHAASSGGHVVDGCGEFMSSGEEGTVESLLCAACDCHRSFHRKE. The segment at residues 198 to 261 is a DNA-binding region (homeobox); the sequence is KKRFRTKFNE…NNKQAAKKKD (64 aa).

Homo- and heterodimer with other ZFHD proteins. Interacts with MIF1 and MIF3; these interactions prevent nuclear localization and DNA-binding to inhibit transcription regulation activity. Binds to ZHD1, ZHD2, ZHD10 and ZHD11. Expressed in seedlings, roots, leaves, stems, flowers and inflorescence.

The protein localises to the nucleus. In terms of biological role, putative transcription factor. This is Zinc-finger homeodomain protein 6 (ZHD6) from Arabidopsis thaliana (Mouse-ear cress).